Here is a 170-residue protein sequence, read N- to C-terminus: ATP synthase subunit b (170 aa).

The helical transmembrane segment at 30 to 50 (FFFVLAIFLVVLGVIGTFVVP) threads the bilayer.

Belongs to the ATPase B chain family. F-type ATPases have 2 components, F(1) - the catalytic core - and F(0) - the membrane proton channel. F(1) has five subunits: alpha(3), beta(3), gamma(1), delta(1), epsilon(1). F(0) has three main subunits: a(1), b(2) and c(10-14). The alpha and beta chains form an alternating ring which encloses part of the gamma chain. F(1) is attached to F(0) by a central stalk formed by the gamma and epsilon chains, while a peripheral stalk is formed by the delta and b chains.

The protein localises to the cell membrane. Functionally, f(1)F(0) ATP synthase produces ATP from ADP in the presence of a proton or sodium gradient. F-type ATPases consist of two structural domains, F(1) containing the extramembraneous catalytic core and F(0) containing the membrane proton channel, linked together by a central stalk and a peripheral stalk. During catalysis, ATP synthesis in the catalytic domain of F(1) is coupled via a rotary mechanism of the central stalk subunits to proton translocation. Its function is as follows. Component of the F(0) channel, it forms part of the peripheral stalk, linking F(1) to F(0). The polypeptide is ATP synthase subunit b (Mycobacterium leprae (strain TN)).